The following is a 127-amino-acid chain: Protein ApaG (127 aa).

The 126-residue stretch at 2–127 (SELVEHIQVH…FRLAGPNQVH (126 aa)) folds into the ApaG domain.

This is Protein ApaG from Chromohalobacter salexigens (strain ATCC BAA-138 / DSM 3043 / CIP 106854 / NCIMB 13768 / 1H11).